Consider the following 86-residue polypeptide: Large ribosomal subunit protein uL23 (86 aa).

It belongs to the universal ribosomal protein uL23 family. In terms of assembly, part of the 50S ribosomal subunit. Contacts protein L29.

Binds to 23S rRNA. One of the proteins that surrounds the polypeptide exit tunnel on the outside of the ribosome. The polypeptide is Large ribosomal subunit protein uL23 (Methanothermobacter thermautotrophicus (strain ATCC 29096 / DSM 1053 / JCM 10044 / NBRC 100330 / Delta H) (Methanobacterium thermoautotrophicum)).